The chain runs to 641 residues: Calpain-6 (641 aa).

The 318-residue stretch at 26-343 (LFCDPTFLPE…FHKLNVCRNV (318 aa)) folds into the Calpain catalytic domain. The interval 344-495 (NNPVFGRKEL…IFSEVPVQLR (152 aa)) is domain III. The C2 domain occupies 498 to 621 (TLDMPKMSCW…YLRKKGGPTA (124 aa)).

It belongs to the peptidase C2 family. In terms of assembly, interacts (via domain III) with microtubules. Interacts (via domain II) with ARHGEF2 (via the N-terminal zinc finger).

It localises to the cytoplasm. Its subcellular location is the perinuclear region. The protein resides in the cytoskeleton. It is found in the spindle. Functionally, microtubule-stabilizing protein that may be involved in the regulation of microtubule dynamics and cytoskeletal organization. May act as a regulator of RAC1 activity through interaction with ARHGEF2 to control lamellipodial formation and cell mobility. Does not seem to have protease activity as it has lost the active site residues. This Mus musculus (Mouse) protein is Calpain-6 (Capn6).